Consider the following 498-residue polypeptide: ATP synthase subunit beta, chloroplastic (498 aa).

Position 172–179 (172–179 (GGAGVGKT)) interacts with ATP.

It belongs to the ATPase alpha/beta chains family. As to quaternary structure, F-type ATPases have 2 components, CF(1) - the catalytic core - and CF(0) - the membrane proton channel. CF(1) has five subunits: alpha(3), beta(3), gamma(1), delta(1), epsilon(1). CF(0) has four main subunits: a(1), b(1), b'(1) and c(9-12).

The protein localises to the plastid. The protein resides in the chloroplast thylakoid membrane. It catalyses the reaction ATP + H2O + 4 H(+)(in) = ADP + phosphate + 5 H(+)(out). Its function is as follows. Produces ATP from ADP in the presence of a proton gradient across the membrane. The catalytic sites are hosted primarily by the beta subunits. The sequence is that of ATP synthase subunit beta, chloroplastic from Solanum bulbocastanum (Wild potato).